A 105-amino-acid polypeptide reads, in one-letter code: Large ribosomal subunit protein uL24 (105 aa).

This sequence belongs to the universal ribosomal protein uL24 family. Part of the 50S ribosomal subunit.

Its function is as follows. One of two assembly initiator proteins, it binds directly to the 5'-end of the 23S rRNA, where it nucleates assembly of the 50S subunit. One of the proteins that surrounds the polypeptide exit tunnel on the outside of the subunit. The polypeptide is Large ribosomal subunit protein uL24 (Azoarcus sp. (strain BH72)).